The following is a 587-amino-acid chain: Sulfite reductase [NADPH] hemoprotein beta-component (587 aa).

Residues 1-13 show a composition bias toward polar residues; it reads MQSTDNDLSQSPP. Residues 1–20 form a disordered region; that stretch reads MQSTDNDLSQSPPKLSADEQ. Cysteine 439, cysteine 445, cysteine 484, and cysteine 488 together coordinate [4Fe-4S] cluster. Siroheme is bound at residue cysteine 488.

The protein belongs to the nitrite and sulfite reductase 4Fe-4S domain family. As to quaternary structure, alpha(8)-beta(8). The alpha component is a flavoprotein, the beta component is a hemoprotein. Siroheme serves as cofactor. [4Fe-4S] cluster is required as a cofactor.

The catalysed reaction is hydrogen sulfide + 3 NADP(+) + 3 H2O = sulfite + 3 NADPH + 4 H(+). The protein operates within sulfur metabolism; hydrogen sulfide biosynthesis; hydrogen sulfide from sulfite (NADPH route): step 1/1. Functionally, component of the sulfite reductase complex that catalyzes the 6-electron reduction of sulfite to sulfide. This is one of several activities required for the biosynthesis of L-cysteine from sulfate. The polypeptide is Sulfite reductase [NADPH] hemoprotein beta-component (Bordetella petrii (strain ATCC BAA-461 / DSM 12804 / CCUG 43448)).